A 388-amino-acid polypeptide reads, in one-letter code: (S)-8-oxocitronellyl enol synthase ISY1 (388 aa).

NADP(+) is bound by residues 35–37, 63–64, 81–82, 105–106, and Gln143; these read TGI, RR, DV, and TW. Active-site residues include Lys147 and Tyr178. Residues Tyr178, Ile205, and 212–214 each bind NADP(+); that span reads SMM.

Belongs to the short-chain dehydrogenases/reductases (SDR) family.

The catalysed reaction is (S)-8-oxocitronellyl enol + NADP(+) = (6E)-8-oxogeranial + NADPH + H(+). The enzyme catalyses (S)-8-oxocitronellyl enol + NAD(+) = (6E)-8-oxogeranial + NADH + H(+). In terms of biological role, iridoid synthase that catalyzes the first step in generation of the iridoid ring scaffold using the linear monoterpene (6E)-8-oxogeranial as substrate. Iridoids comprise a large family of distinctive bicyclic monoterpenes that possess a wide range of pharmacological activities, including anticancer, anti-inflammatory, antifungal and antibacterial activities. Catalyzes the conversion of the linear monoterpene (6E)-8-oxogeranial to (S)-8-oxocitronellyl enol, a precursor of nepetalactones, which are metabolites that are both insect-repellent and have euphoric effect in cats. This chain is (S)-8-oxocitronellyl enol synthase ISY1, found in Nepeta racemosa (Catmint).